The sequence spans 457 residues: Cysteine desulfurase (457 aa).

Residues Ala127, Thr128, Gln235, Ser255, and His257 each coordinate pyridoxal 5'-phosphate. Position 258 is an N6-(pyridoxal phosphate)lysine (Lys258). Residue Thr295 coordinates pyridoxal 5'-phosphate. Cys381 functions as the Cysteine persulfide intermediate in the catalytic mechanism. Cys381 provides a ligand contact to [2Fe-2S] cluster. A Zn(2+)-binding site is contributed by Cys381. Cysteine persulfide is present on Cys381.

This sequence belongs to the class-V pyridoxal-phosphate-dependent aminotransferase family. NifS/IscS subfamily. In terms of assembly, homodimer. Component of the mitochondrial core iron-sulfur cluster (ISC) complex composed of NFS1, LYRM4, NDUFAB1, ISCU, FXN, and FDX2; this complex is a heterohexamer containing two copies of each monomer. Component of cyteine desulfurase complex composed of NFS1, LYRM4 and NDUFAB1; this complex contributes to the activation of cysteine desulfurase activity and NFS1 stabilization. Interacts (homodimer form) with ISCU (D-state); each monomer interacts with the C-terminal regions of each NFS1 monomer. Interacts with HSPA9. Interacts (via homodimer form) with FDX2. Interacts (via homodimer form) with FXN. Interacts with LYRM4. Component of a complex composed of FXN, NFS1, LYRM4 and ISCU. Monomer. Homodimer. Oligomer. Interacts with ISCU. Component of the cysteine desulfurase complex composed of NFS1 and LYRM4; this complex contributes to the activation of cysteine desulfurase activity. Interacts with MOCS3. It depends on pyridoxal 5'-phosphate as a cofactor. N-gluconoylated. Post-translationally, cysteine persulfide intermediate is reduced by thiol-containing molecules like glutathione and L-cysteine. Persulfide reduction is a rate-limiting step of cysteine desulfurase catalytic cycle. In terms of tissue distribution, predominantly expressed in heart and skeletal muscle. Also found in brain, liver and pancreas.

The protein localises to the mitochondrion. Its subcellular location is the cytoplasm. It is found in the nucleus. The protein resides in the cytoskeleton. It localises to the microtubule organizing center. The protein localises to the centrosome. It carries out the reaction (sulfur carrier)-H + L-cysteine = (sulfur carrier)-SH + L-alanine. The enzyme catalyses L-cysteinyl-[cysteine desulfurase] + L-cysteine = S-sulfanyl-L-cysteinyl-[cysteine desulfurase] + L-alanine. With respect to regulation, active only in complex with LYRM4. Functionally, cysteine desulfurase, of the core iron-sulfur cluster (ISC) assembly complex, that catalyzes the desulfuration of L-cysteine to L-alanine, as component of the cysteine desulfurase complex, leading to the formation of a cysteine persulfide intermediate at the active site cysteine residue and participates in the [2Fe-2S] clusters assembly on the scaffolding protein ISCU. The persulfide is then transferred on the flexible Cys loop from the catalytic site of NFS1 to the surface of NFS1. After the NFS1-linked persulfide sulfur is transferred to one of the conserved Cys residues of the scaffold, a reaction assisted by FXN. The core iron-sulfur cluster (ISC) assembly complex is involved in the de novo synthesis of a [2Fe-2S] cluster, the first step of the mitochondrial iron-sulfur protein biogenesis. This process is initiated by the cysteine desulfurase complex (NFS1:LYRM4:NDUFAB1) that produces persulfide which is delivered on the scaffold protein ISCU in a FXN-dependent manner. Then this complex is stabilized by FDX2 which provides reducing equivalents to accomplish the [2Fe-2S] cluster assembly. Finally, the [2Fe-2S] cluster is transferred from ISCU to chaperone proteins, including HSCB, HSPA9 and GLRX5. May catalyze the desulfuration of L-cysteine to L-alanine as component of the cysteine desulfurase complex (NFS1:LYRM4), leading to the formation of a cysteine persulfide intermediate. Acts as a sulfur donor for MOCS3 by transferring the sulfur of the cysteine persulfide intermediate on MOCS3. The polypeptide is Cysteine desulfurase (Homo sapiens (Human)).